A 190-amino-acid chain; its full sequence is MLILGSGSARRKELLESASIDFLLVPSDYNESQVAFEGDTLKYVETIAENKAKALLHKYPLDVILTADTVVEVDGEILGKPKDIEDAQKMLQLLNDKTHHVYTGVCIVSKDKKEVFVESASVTFNKLSTLDIESYIQTKEPMDKAGAYAIQGIGAKLIKQYDGDFHTIMGLPLKLVLEKLKDFNIVPKLK.

The Proton acceptor role is filled by D68.

This sequence belongs to the Maf family. YhdE subfamily. It depends on a divalent metal cation as a cofactor.

The protein localises to the cytoplasm. The catalysed reaction is dTTP + H2O = dTMP + diphosphate + H(+). It carries out the reaction UTP + H2O = UMP + diphosphate + H(+). Functionally, nucleoside triphosphate pyrophosphatase that hydrolyzes dTTP and UTP. May have a dual role in cell division arrest and in preventing the incorporation of modified nucleotides into cellular nucleic acids. The polypeptide is dTTP/UTP pyrophosphatase (Acholeplasma laidlawii (strain PG-8A)).